Here is a 288-residue protein sequence, read N- to C-terminus: GCN5-related N-acetyltransferase 6, chloroplastic (288 aa).

A chloroplast-targeting transit peptide spans 1–111; sequence MSTISIHRTE…YWTAAWLRAE (111 aa). In terms of domain architecture, N-acetyltransferase spans 151-288; sequence SCIVAVKKEE…DDTYLLQYTS (138 aa). Residues 215-217, 223-228, 254-256, and tyrosine 261 contribute to the acetyl-CoA site; these read LCV, RQGIAC, and NSV. The Proton donor role is filled by tyrosine 261.

Belongs to the acetyltransferase family. GNAT subfamily. Oligomer. Post-translationally, autoacetylated. As to expression, expressed in green tissues and in roots.

The protein resides in the plastid. Its subcellular location is the chloroplast. The protein localises to the cytoplasm. It localises to the perinuclear region. The enzyme catalyses an N-terminal L-alpha-aminoacyl-[protein] + acetyl-CoA = N-terminal N(alpha)-acetyl-L-alpha-aminoacyl-[protein] + CoA + H(+). The catalysed reaction is L-lysyl-[protein] + acetyl-CoA = N(6)-acetyl-L-lysyl-[protein] + CoA + H(+). It catalyses the reaction N-terminal L-alanyl-[protein] + acetyl-CoA = N-terminal N(alpha)-acetyl-L-alanyl-[protein] + CoA + H(+). It carries out the reaction N-terminal L-seryl-[protein] + acetyl-CoA = N-terminal N(alpha)-acetyl-L-seryl-[protein] + CoA + H(+). The enzyme catalyses N-terminal L-threonyl-[protein] + acetyl-CoA = N-terminal N(alpha)-acetyl-L-threonyl-[protein] + CoA + H(+). The catalysed reaction is N-terminal L-methionyl-[protein] + acetyl-CoA = N-terminal N(alpha)-acetyl-L-methionyl-[protein] + CoA + H(+). It catalyses the reaction N-terminal L-valyl-[protein] + acetyl-CoA = N-terminal N(alpha)-acetyl-L-valyl-[protein] + CoA + H(+). Its function is as follows. Protein acetyltransferase with dual specificity triggering both N-alpha-acetylation (NTA), with a large spectrum of modified N-termini, including methionine, alanine, serine, threonine and to a lower extent valine as substrates, and epsilon-lysine acetylation (KA). The polypeptide is GCN5-related N-acetyltransferase 6, chloroplastic (Arabidopsis thaliana (Mouse-ear cress)).